A 297-amino-acid polypeptide reads, in one-letter code: Phosphatidylglycerol--prolipoprotein diacylglyceryl transferase (297 aa).

4 helical membrane passes run 20–40 (FLTI…GLFV), 50–70 (INPL…IIGA), 105–125 (AVWE…LSII), and 133–153 (IHLK…QSIG). Arg154 is an a 1,2-diacyl-sn-glycero-3-phospho-(1'-sn-glycerol) binding site. Transmembrane regions (helical) follow at residues 193-213 (PTFL…IFVF), 225-245 (GFIS…IEGL), and 266-286 (AQFI…FLRL).

The protein belongs to the Lgt family.

The protein localises to the cell inner membrane. It catalyses the reaction L-cysteinyl-[prolipoprotein] + a 1,2-diacyl-sn-glycero-3-phospho-(1'-sn-glycerol) = an S-1,2-diacyl-sn-glyceryl-L-cysteinyl-[prolipoprotein] + sn-glycerol 1-phosphate + H(+). Its pathway is protein modification; lipoprotein biosynthesis (diacylglyceryl transfer). Catalyzes the transfer of the diacylglyceryl group from phosphatidylglycerol to the sulfhydryl group of the N-terminal cysteine of a prolipoprotein, the first step in the formation of mature lipoproteins. This chain is Phosphatidylglycerol--prolipoprotein diacylglyceryl transferase, found in Prochlorococcus marinus (strain MIT 9312).